The chain runs to 516 residues: Rho guanine nucleotide exchange factor 9 (516 aa).

One can recognise an SH3 domain in the interval 8 to 67 (DSIVSAEAVWDHVTMANRELAFKAGDVIKVLDASNKDWWWGQIDDEEGWFPASFVRLWVN). An interaction with GPHN region spans residues 100-110 (RDQMRANVINE). One can recognise a DH domain in the interval 103–287 (MRANVINEIM…RNVTQQINER (185 aa)). Residues 318-425 (ELIYTGEMAW…WLRAFREERK (108 aa)) enclose the PH domain. A disordered region spans residues 450–480 (RKASKQKGVNSARSVPPSYPPPQDPLNQGQY). Serine 502 bears the Phosphoserine mark.

Interacts with GPHN. As to expression, detected in embryonic and adult brain.

It is found in the cytoplasm. It localises to the postsynaptic density. Its function is as follows. Acts as a guanine nucleotide exchange factor (GEF) for CDC42. Promotes formation of GPHN clusters. In Mus musculus (Mouse), this protein is Rho guanine nucleotide exchange factor 9 (Arhgef9).